Here is a 348-residue protein sequence, read N- to C-terminus: Nitrogenase vanadium-iron protein beta chain (348 aa).

The [8Fe-7S] cluster site is built by C31, C56, C115, and S153.

Belongs to the NifD/NifK/NifE/NifN family. Hexamer of two alpha, two beta, and two delta chains. [8Fe-7S] cluster serves as cofactor.

It carries out the reaction N2 + 8 reduced [2Fe-2S]-[ferredoxin] + 16 ATP + 16 H2O = H2 + 8 oxidized [2Fe-2S]-[ferredoxin] + 2 NH4(+) + 16 ADP + 16 phosphate + 6 H(+). In terms of biological role, this vanadium-iron protein is part of the nitrogenase complex that catalyzes the key enzymatic reactions in nitrogen fixation. This Azorhizophilus paspali (Azotobacter paspali) protein is Nitrogenase vanadium-iron protein beta chain (vnfK).